The primary structure comprises 313 residues: Porphobilinogen deaminase (313 aa).

Position 242 is an S-(dipyrrolylmethanemethyl)cysteine (Cys-242).

This sequence belongs to the HMBS family. In terms of assembly, monomer. It depends on dipyrromethane as a cofactor.

The catalysed reaction is 4 porphobilinogen + H2O = hydroxymethylbilane + 4 NH4(+). It functions in the pathway porphyrin-containing compound metabolism; protoporphyrin-IX biosynthesis; coproporphyrinogen-III from 5-aminolevulinate: step 2/4. Its function is as follows. Tetrapolymerization of the monopyrrole PBG into the hydroxymethylbilane pre-uroporphyrinogen in several discrete steps. In Escherichia coli (strain K12 / MC4100 / BW2952), this protein is Porphobilinogen deaminase.